The primary structure comprises 116 residues: uncharacterized protein (116 aa).

3 helical membrane passes run 5–27, 42–64, and 88–110; these read AILLSLAGIADSSYLLLSEAVPC, PFVPALLGLCWFVLSIVVFTAGV, and VLHGYFCPYCFTAYGIGIVVVAI.

It localises to the cell membrane. This is an uncharacterized protein from Archaeoglobus fulgidus (strain ATCC 49558 / DSM 4304 / JCM 9628 / NBRC 100126 / VC-16).